We begin with the raw amino-acid sequence, 302 residues long: Sulfotransferase 1C4 (302 aa).

55-60 (KAGTTW) is a 3'-phosphoadenylyl sulfate binding site. Residue 113–115 (KTH) participates in substrate binding. The active-site Proton acceptor is the His115. Residues Arg137, Ser145, Tyr200, 234–239 (TSFDVM), and 262–266 (FMRKG) each bind 3'-phosphoadenylyl sulfate.

The protein belongs to the sulfotransferase 1 family. Expressed at high levels in fetal lung and kidney and at low levels in fetal heart, adult kidney, ovary and spinal cord.

It is found in the cytoplasm. It localises to the cytosol. It carries out the reaction a phenol + 3'-phosphoadenylyl sulfate = an aryl sulfate + adenosine 3',5'-bisphosphate + H(+). The catalysed reaction is 17beta-estradiol + 3'-phosphoadenylyl sulfate = 17beta-estradiol 3-sulfate + adenosine 3',5'-bisphosphate + H(+). The enzyme catalyses bisphenol A + 3'-phosphoadenylyl sulfate = bisphenyl A sulfate + adenosine 3',5'-bisphosphate + H(+). Functionally, sulfotransferase that utilizes 3'-phospho-5'-adenylyl sulfate (PAPS) as sulfonate donor to catalyze the sulfate conjugation of phenolic compounds. Can also sulfonate estrogenic compounds, however, the dietary flavonoids (phytoestrogen) and environmental estrogens, like bisphenol A are better substrates than 17beta-estradiol (E2). Mediates the sulfation of doxorubicin and its analog epirubicin, two antitumor anthracyclines. This is Sulfotransferase 1C4 from Homo sapiens (Human).